Reading from the N-terminus, the 484-residue chain is 6-phosphogluconate dehydrogenase, decarboxylating (484 aa).

Residues 11 to 16, 34 to 36, 76 to 78, and asparagine 104 contribute to the NADP(+) site; these read GLAVMG, NRT, and VRA. Substrate is bound by residues asparagine 104 and 130 to 132; that span reads SGG. Lysine 185 functions as the Proton acceptor in the catalytic mechanism. 188–189 serves as a coordination point for substrate; that stretch reads HN. The Proton donor role is filled by glutamate 192. 5 residues coordinate substrate: tyrosine 193, lysine 262, arginine 289, arginine 447, and histidine 453.

It belongs to the 6-phosphogluconate dehydrogenase family. In terms of assembly, homodimer.

It carries out the reaction 6-phospho-D-gluconate + NADP(+) = D-ribulose 5-phosphate + CO2 + NADPH. It participates in carbohydrate degradation; pentose phosphate pathway; D-ribulose 5-phosphate from D-glucose 6-phosphate (oxidative stage): step 3/3. Catalyzes the oxidative decarboxylation of 6-phosphogluconate to ribulose 5-phosphate and CO(2), with concomitant reduction of NADP to NADPH. This is 6-phosphogluconate dehydrogenase, decarboxylating from Aggregatibacter actinomycetemcomitans (Actinobacillus actinomycetemcomitans).